An 874-amino-acid polypeptide reads, in one-letter code: DNA mismatch repair protein MutS (874 aa).

613–620 contributes to the ATP binding site; sequence GPNMGGKS. A disordered region spans residues 799-820; that stretch reads EAGSTPSPAPVSVNEPKPAAPT.

This sequence belongs to the DNA mismatch repair MutS family.

Its function is as follows. This protein is involved in the repair of mismatches in DNA. It is possible that it carries out the mismatch recognition step. This protein has a weak ATPase activity. The sequence is that of DNA mismatch repair protein MutS from Marinobacter nauticus (strain ATCC 700491 / DSM 11845 / VT8) (Marinobacter aquaeolei).